A 473-amino-acid chain; its full sequence is ATP synthase subunit beta (473 aa).

Residue 153–160 coordinates ATP; that stretch reads GGAGVGKT.

It belongs to the ATPase alpha/beta chains family. In terms of assembly, F-type ATPases have 2 components, CF(1) - the catalytic core - and CF(0) - the membrane proton channel. CF(1) has five subunits: alpha(3), beta(3), gamma(1), delta(1), epsilon(1). CF(0) has three main subunits: a(1), b(2) and c(9-12). The alpha and beta chains form an alternating ring which encloses part of the gamma chain. CF(1) is attached to CF(0) by a central stalk formed by the gamma and epsilon chains, while a peripheral stalk is formed by the delta and b chains.

It is found in the cell membrane. The catalysed reaction is ATP + H2O + 4 H(+)(in) = ADP + phosphate + 5 H(+)(out). Its function is as follows. Produces ATP from ADP in the presence of a proton gradient across the membrane. The catalytic sites are hosted primarily by the beta subunits. The protein is ATP synthase subunit beta of Rickettsia africae (strain ESF-5).